A 391-amino-acid chain; its full sequence is MMCGFTSNQSPKKLSSKKLSATNVHLEISPVKCDSPCKGYENVQASYLDTANCTTVTRGADIKDDLPLHNKENLLHRFGDLETHSDEEYSGLQDSGYSSILQNDSPCQDETDNNVSDIQLRETPKNFVQFQKPLHTLSTKNLPALRFEEAMCSTLKKMRKTSKKIDWNAVDDVVCGGNYGLENLIGKNMGLERFDILAELFHRDFKHLLTKILRHLSAMDLINVISVSTTWRKILQKDNSAYNSYKLGCKELCEKKAKVSAHTATRDESLCRVPLASVQKVAASSLCTSKKQSKNRGLSNNRHAEFIEVAQTLKNDQCLKVCVDCSSPAKYDPYLHRATCTRESCKFDFCTLCSCKYHGSKCCQTSKPRSYRVPSEPLPGSKKSKQNLRRL.

Positions 198 to 245 constitute an F-box domain; it reads AELFHRDFKHLLTKILRHLSAMDLINVISVSTTWRKILQKDNSAYNSY. Residues 318 to 366 form a ZBR-type zinc finger; that stretch reads CLKVCVDCSSPAKYDPYLHRATCTRESCKFDFCTLCSCKYHGSKCCQTS. Positions 322, 325, 340, 345, 350, 353, 358, and 363 each coordinate Zn(2+). Residues 365-391 form a disordered region; sequence TSKPRSYRVPSEPLPGSKKSKQNLRRL. Residues 382–391 are compositionally biased toward basic residues; the sequence is KKSKQNLRRL.

Part of a SCF (SKP1-cullin-F-box) protein ligase complex. Interacts with btrc. Interacts with skp1. Interacts with cdc20. Interacts with pin1; stabilizes fbxo5 by preventing its association with btrc in an isomerization-dependent pathway; this interaction is present during G2 phase and prevents fbxo5 degradation. Interacts with plk1. Post-translationally, proteolysed; proteolysis is induced by both cyclin B-cdk1 and cyclin A-cdk1/2 complex through probable phosphorylation. Proteolysis is inhibited by pin1 during G2.

The protein localises to the nucleus. It is found in the cytoplasm. Its subcellular location is the cytoskeleton. The protein resides in the spindle. It localises to the microtubule organizing center. The protein localises to the centrosome. It participates in protein modification; protein ubiquitination. Regulates progression through early mitosis by inhibiting the anaphase promoting complex/cyclosome (APC). Binds to the APC activators cdc20 to prevent APC activation. Can also bind directly to the APC to inhibit substrate-binding. Required to arrest unfertilized eggs at metaphase of meiosis II, by preventing their release from metaphase of meiosis II, through inhibition of APC-dependent cyclin B destruction leading to stabilization of cyclin B-cdk1 complex activity. This is F-box only protein 5 from Xenopus tropicalis (Western clawed frog).